The primary structure comprises 64 residues: Putative antitoxin VapB4 (64 aa).

Belongs to the UPF0165 family.

Functionally, possibly the antitoxin component of a type II toxin-antitoxin (TA) system. Its cognate toxin is VapC4 (Potential). This Archaeoglobus fulgidus (strain ATCC 49558 / DSM 4304 / JCM 9628 / NBRC 100126 / VC-16) protein is Putative antitoxin VapB4 (vapB4).